The following is a 438-amino-acid chain: POU domain, class 3, transcription factor 3-A (438 aa).

Disordered regions lie at residues 22-43 (VHSE…SVSG), 102-172 (SPWS…QSQQ), and 186-248 (GMLN…PTSD). Polar residues-rich tracts occupy residues 103–123 (PWSS…VKSS) and 146–159 (QSHQ…TASH). Residues 160 to 172 (ISTITGGQQQSQQ) show a composition bias toward low complexity. Positions 210–230 (HHHHHHHQQQHPHHHHHHQHH) are enriched in basic residues. Residues 242 to 316 (EDTPTSDDLE…LLNKWLEEAD (75 aa)) form the POU-specific domain. Positions 334 to 393 (KRKKRTSIEVSVKGALESHFLKCPKPSAQEITSLADNLQLEKEVVRVWFCNRRQKEKRMT) form a DNA-binding region, homeobox.

This sequence belongs to the POU transcription factor family. Class-3 subfamily. As to expression, predominantly expressed in the embryonic and adult central nervous system. In adults, isoform 2 is expressed in the brain, ovary, basal cells of the skin and muscle satellite cells.

It is found in the nucleus. In terms of biological role, transcription factor that may play important roles in patterning the embryonic brain. This chain is POU domain, class 3, transcription factor 3-A (pou3f3a), found in Danio rerio (Zebrafish).